The primary structure comprises 466 residues: Ribulose bisphosphate carboxylase large chain (466 aa).

An N6,N6,N6-trimethyllysine modification is found at Lys-4. Asn-113 and Thr-163 together coordinate substrate. Lys-165 acts as the Proton acceptor in catalysis. Lys-167 serves as a coordination point for substrate. The Mg(2+) site is built by Lys-191, Asp-193, and Glu-194. Residue Lys-191 is modified to N6-carboxylysine. The active-site Proton acceptor is the His-284. 3 residues coordinate substrate: Arg-285, His-317, and Ser-369.

The protein belongs to the RuBisCO large chain family. Type I subfamily. Heterohexadecamer of 8 large chains and 8 small chains; disulfide-linked. The disulfide link is formed within the large subunit homodimers. Requires Mg(2+) as cofactor. Post-translationally, the disulfide bond which can form in the large chain dimeric partners within the hexadecamer appears to be associated with oxidative stress and protein turnover.

It is found in the plastid. The protein localises to the chloroplast. The enzyme catalyses 2 (2R)-3-phosphoglycerate + 2 H(+) = D-ribulose 1,5-bisphosphate + CO2 + H2O. It catalyses the reaction D-ribulose 1,5-bisphosphate + O2 = 2-phosphoglycolate + (2R)-3-phosphoglycerate + 2 H(+). RuBisCO catalyzes two reactions: the carboxylation of D-ribulose 1,5-bisphosphate, the primary event in carbon dioxide fixation, as well as the oxidative fragmentation of the pentose substrate in the photorespiration process. Both reactions occur simultaneously and in competition at the same active site. This Proboscidea louisianica (Louisiana Devil's-claw) protein is Ribulose bisphosphate carboxylase large chain.